The following is a 391-amino-acid chain: GTPase Obg (391 aa).

An Obg domain is found at 1–159 (MQFVDEATID…RRLRLELKVL (159 aa)). The OBG-type G domain occupies 160-333 (ADVGLLGMPN…LVYALMNAIE (174 aa)). GTP-binding positions include 166–173 (GMPNAGKS), 191–195 (FTTLI), 213–216 (DIPG), 283–286 (NKID), and 314–316 (SAA). Positions 173 and 193 each coordinate Mg(2+). The segment covering 367 to 377 (LKAEARQARQN) has biased composition (basic and acidic residues). The tract at residues 367–391 (LKAEARQARQNDDDDDHDVEVVYEP) is disordered. Residues 378–391 (DDDDDHDVEVVYEP) are compositionally biased toward acidic residues.

It belongs to the TRAFAC class OBG-HflX-like GTPase superfamily. OBG GTPase family. Monomer. It depends on Mg(2+) as a cofactor.

It is found in the cytoplasm. Its function is as follows. An essential GTPase which binds GTP, GDP and possibly (p)ppGpp with moderate affinity, with high nucleotide exchange rates and a fairly low GTP hydrolysis rate. Plays a role in control of the cell cycle, stress response, ribosome biogenesis and in those bacteria that undergo differentiation, in morphogenesis control. This chain is GTPase Obg, found in Alcanivorax borkumensis (strain ATCC 700651 / DSM 11573 / NCIMB 13689 / SK2).